The following is a 2225-amino-acid chain: Multifunctional protein pyr1-3 (2225 aa).

Position 1 is an N-acetylmethionine (M1). The interval 40-390 (MVGYNESISD…NVCGEQQHKS (351 aa)) is GATase (Glutamine amidotransferase). L-glutamine is bound by residues S51, G245, and G247. One can recognise a Glutamine amidotransferase type-1 domain in the interval 196 to 388 (KVIVLDCGIK…VDNVCGEQQH (193 aa)). The active-site Nucleophile; for GATase activity is the C275. L-glutamine-binding residues include Q279, N317, G319, and F320. Active-site for GATase activity residues include H361 and E363. The interval 391–405 (PMNKSKIIDCPKGIN) is linker. Positions 406–948 (KVLILGSGGL…TNDVNINEKS (543 aa)) are CPSase A. A CPSase (Carbamoyl-phosphate synthase) region spans residues 406–1461 (KVLILGSGGL…MKGPMPIENV (1056 aa)). 11 residues coordinate ATP: R526, R566, G572, G573, K603, E610, G636, I637, H638, Q679, and E693. 2 consecutive ATP-grasp domains span residues 530-722 (AEKL…KVAL) and 1069-1260 (SRLL…KIII). Mg(2+) contacts are provided by Q679, E693, and N695. Positions 679, 693, and 695 each coordinate Mn(2+). The CPSase B stretch occupies residues 949–1461 (YITLGSGSYR…MKGPMPIENV (513 aa)). ATP-binding residues include R1105, K1144, I1146, E1151, G1176, V1177, H1178, S1179, Q1219, and E1231. Residues Q1219, E1231, and N1233 each contribute to the Mg(2+) site. The Mn(2+) site is built by Q1219, E1231, and N1233. The region spanning 1324–1470 (FKAPEKNVLL…VDWRTSNKII (147 aa)) is the MGS-like domain. Positions 1463–1797 (WRTSNKIIRL…VRGKVVKVVL (335 aa)) are DHOase (dihydroorotase). Positions 1479 and 1481 each coordinate Zn(2+). 2 residues coordinate (S)-dihydroorotate: R1483 and N1513. 5 residues coordinate Zn(2+): K1564, H1599, C1622, H1623, and E1646. K1564 carries the N6-carboxylysine modification. R1670 is a binding site for (S)-dihydroorotate. Residue D1695 participates in Zn(2+) binding. D1695 (for DHOase activity) is an active-site residue. (S)-dihydroorotate contacts are provided by H1699 and P1711. Residues 1798–1916 (RGQIAFIDGK…DTLQTAFNIS (119 aa)) form a linker region. Positions 1917–2225 (DNSLAGKHIF…LLALVFGAGV (309 aa)) are ATCase (Aspartate transcarbamylase). Residues R1974 and T1975 each contribute to the carbamoyl phosphate site. Residue K2002 participates in L-aspartate binding. Carbamoyl phosphate contacts are provided by R2023, H2051, and Q2054. The L-aspartate site is built by R2084 and R2145. Residues L2184 and P2185 each coordinate carbamoyl phosphate.

The protein in the N-terminal section; belongs to the CarA family. In the 2nd section; belongs to the CarB family. This sequence in the 3rd section; belongs to the metallo-dependent hydrolases superfamily. DHOase family. CAD subfamily. It in the C-terminal section; belongs to the aspartate/ornithine carbamoyltransferase superfamily. ATCase family. In terms of assembly, homohexamer. Mg(2+) serves as cofactor. It depends on Mn(2+) as a cofactor. Zn(2+) is required as a cofactor.

The protein resides in the cytoplasm. The enzyme catalyses hydrogencarbonate + L-glutamine + 2 ATP + H2O = carbamoyl phosphate + L-glutamate + 2 ADP + phosphate + 2 H(+). The catalysed reaction is L-glutamine + H2O = L-glutamate + NH4(+). It catalyses the reaction hydrogencarbonate + NH4(+) + 2 ATP = carbamoyl phosphate + 2 ADP + phosphate + 2 H(+). It carries out the reaction carbamoyl phosphate + L-aspartate = N-carbamoyl-L-aspartate + phosphate + H(+). The enzyme catalyses (S)-dihydroorotate + H2O = N-carbamoyl-L-aspartate + H(+). Its pathway is pyrimidine metabolism; UMP biosynthesis via de novo pathway; (S)-dihydroorotate from bicarbonate: step 1/3. It functions in the pathway pyrimidine metabolism; UMP biosynthesis via de novo pathway; (S)-dihydroorotate from bicarbonate: step 2/3. It participates in pyrimidine metabolism; UMP biosynthesis via de novo pathway; (S)-dihydroorotate from bicarbonate: step 3/3. Allosterically regulated and controlled by phosphorylation. 5-phosphoribose 1-diphosphate is an activator while UMP is an inhibitor of the CPSase reaction. Functionally, multifunctional protein that encodes the first 3 enzymatic activities of the de novo pyrimidine pathway: carbamoylphosphate synthetase (CPSase; EC 6.3.5.5), aspartate transcarbamylase (ATCase; EC 2.1.3.2) and dihydroorotase (DHOase; EC 3.5.2.3). The CPSase-function is accomplished in 2 steps, by a glutamine-dependent amidotransferase activity (GATase) that binds and cleaves glutamine to produce ammonia, followed by an ammonium-dependent carbamoyl phosphate synthetase, which reacts with the ammonia, hydrogencarbonate and ATP to form carbamoyl phosphate. The endogenously produced carbamoyl phosphate is sequestered and channeled to the ATCase active site. ATCase then catalyzes the formation of carbamoyl-L-aspartate from L-aspartate and carbamoyl phosphate. In the last step, DHOase catalyzes the cyclization of carbamoyl aspartate to dihydroorotate. This is Multifunctional protein pyr1-3 (pyr1-3) from Dictyostelium discoideum (Social amoeba).